The primary structure comprises 340 residues: Entry-fusion complex protein OPG094 (340 aa).

The disordered stretch occupies residues 1–20; that stretch reads MGGGVSVELPKRDPPPGVPT. Gly-2 carries N-myristoyl glycine; by host lipidation. Over 2-319 the chain is Virion surface; that stretch reads GGGVSVELPK…VQHNIKHSFD (318 aa). A helical; Signal-anchor for type II membrane protein membrane pass occupies residues 320-340; the sequence is LKLHLISLLSLLVIWILIVAI.

It belongs to the orthopoxvirus OPG086 family. As to quaternary structure, interacts with OPG143. Component of the entry fusion complex (EFC) composed of OPG053, OPG076, OPG086, OPG094, OPG095, OPG099, OPG107, OPG143, OPG104, OPG147 and OPG155. Except for OPG095 and OPG053, each of the EFC proteins is required for assembly or stability of the complex. Post-translationally, unglycosylated because produced in viral factories instead of the classic ER -Golgi route.

The protein resides in the virion membrane. In terms of biological role, component of the entry fusion complex (EFC), which consists of 11 proteins. During cell infection, this complex mediates entry of the virion core into the host cytoplasm by a two-step mechanism consisting of lipid mixing of the viral and cellular membranes and subsequent pore formation. The polypeptide is Entry-fusion complex protein OPG094 (OPG094) (Variola virus).